The chain runs to 179 residues: Large ribosomal subunit protein uL5 (179 aa).

Belongs to the universal ribosomal protein uL5 family. Part of the 50S ribosomal subunit; part of the 5S rRNA/L5/L18/L25 subcomplex. Contacts the 5S rRNA and the P site tRNA. Forms a bridge to the 30S subunit in the 70S ribosome.

Functionally, this is one of the proteins that bind and probably mediate the attachment of the 5S RNA into the large ribosomal subunit, where it forms part of the central protuberance. In the 70S ribosome it contacts protein S13 of the 30S subunit (bridge B1b), connecting the 2 subunits; this bridge is implicated in subunit movement. Contacts the P site tRNA; the 5S rRNA and some of its associated proteins might help stabilize positioning of ribosome-bound tRNAs. The protein is Large ribosomal subunit protein uL5 of Buchnera aphidicola subsp. Acyrthosiphon kondoi (Acyrthosiphon kondoi symbiotic bacterium).